The primary structure comprises 388 residues: Succinate--CoA ligase [ADP-forming] subunit beta (388 aa).

The ATP-grasp domain maps to 9–244 (KQLFAEYGLP…PSQDDPREAH (236 aa)). ATP contacts are provided by residues lysine 46, 53–55 (GRG), glutamate 99, threonine 102, and glutamate 107. 2 residues coordinate Mg(2+): asparagine 199 and aspartate 213. Substrate-binding positions include asparagine 264 and 321–323 (GIV).

This sequence belongs to the succinate/malate CoA ligase beta subunit family. In terms of assembly, heterotetramer of two alpha and two beta subunits. Mg(2+) serves as cofactor.

The catalysed reaction is succinate + ATP + CoA = succinyl-CoA + ADP + phosphate. It catalyses the reaction GTP + succinate + CoA = succinyl-CoA + GDP + phosphate. Its pathway is carbohydrate metabolism; tricarboxylic acid cycle; succinate from succinyl-CoA (ligase route): step 1/1. In terms of biological role, succinyl-CoA synthetase functions in the citric acid cycle (TCA), coupling the hydrolysis of succinyl-CoA to the synthesis of either ATP or GTP and thus represents the only step of substrate-level phosphorylation in the TCA. The beta subunit provides nucleotide specificity of the enzyme and binds the substrate succinate, while the binding sites for coenzyme A and phosphate are found in the alpha subunit. This is Succinate--CoA ligase [ADP-forming] subunit beta from Pseudomonas fluorescens (strain Pf0-1).